The primary structure comprises 290 residues: Homeobox protein HMX3-B (290 aa).

Disordered stretches follow at residues 1 to 41 (MADS…GSSK) and 96 to 169 (EKVN…KKKT). Residues 107 to 124 (LDRHTPDPPKSDQESKEE) are compositionally biased toward basic and acidic residues. Positions 125–137 (SADDEIALEESDA) are enriched in acidic residues. Basic and acidic residues predominate over residues 138–162 (EEPKKETDQEDDWMRKGEDLESDKK). The segment at residues 166–225 (KKKTRTVFSRSQVFQLESTFDIKRYLSSSERAGLAASLHLTETQVKIWFQNRRNKWKRQL) is a DNA-binding region (homeobox).

Belongs to the HMX homeobox family. As to expression, expressed in the ear placode and vesicle and in cells forming the vestibulo-acoustic ganglion.

It localises to the nucleus. Its function is as follows. Transcription factor involved in specification of neuronal cell types and which is required for inner ear and hypothalamus development. Binds to the 5'-CAAGTG-3' core sequence. This chain is Homeobox protein HMX3-B (hmx3b), found in Oryzias latipes (Japanese rice fish).